The chain runs to 192 residues: Imidazole glycerol phosphate synthase subunit HisH (192 aa).

The 192-residue stretch at M1–D192 folds into the Glutamine amidotransferase type-1 domain. C77 (nucleophile) is an active-site residue. Residues H169 and E171 contribute to the active site.

Heterodimer of HisH and HisF.

The protein localises to the cytoplasm. It carries out the reaction 5-[(5-phospho-1-deoxy-D-ribulos-1-ylimino)methylamino]-1-(5-phospho-beta-D-ribosyl)imidazole-4-carboxamide + L-glutamine = D-erythro-1-(imidazol-4-yl)glycerol 3-phosphate + 5-amino-1-(5-phospho-beta-D-ribosyl)imidazole-4-carboxamide + L-glutamate + H(+). The enzyme catalyses L-glutamine + H2O = L-glutamate + NH4(+). It participates in amino-acid biosynthesis; L-histidine biosynthesis; L-histidine from 5-phospho-alpha-D-ribose 1-diphosphate: step 5/9. IGPS catalyzes the conversion of PRFAR and glutamine to IGP, AICAR and glutamate. The HisH subunit catalyzes the hydrolysis of glutamine to glutamate and ammonia as part of the synthesis of IGP and AICAR. The resulting ammonia molecule is channeled to the active site of HisF. The polypeptide is Imidazole glycerol phosphate synthase subunit HisH (Staphylococcus aureus (strain COL)).